Consider the following 358-residue polypeptide: Molybdenum import ATP-binding protein ModC 2 (358 aa).

The region spanning 1–234 (MPEQGIEAQL…PRLPLNHPDE (234 aa)) is the ABC transporter domain. Residue 35-42 (GRSGSGKT) coordinates ATP. The 66-residue stretch at 293 to 358 (NSSILNILRV…AQIKSVALME (66 aa)) folds into the Mop domain.

Belongs to the ABC transporter superfamily. Molybdate importer (TC 3.A.1.8) family. In terms of assembly, the complex is composed of two ATP-binding proteins (ModC), two transmembrane proteins (ModB) and a solute-binding protein (ModA).

The protein resides in the cell inner membrane. The enzyme catalyses molybdate(out) + ATP + H2O = molybdate(in) + ADP + phosphate + H(+). In terms of biological role, part of the ABC transporter complex ModABC involved in molybdenum import. Responsible for energy coupling to the transport system. The protein is Molybdenum import ATP-binding protein ModC 2 of Azotobacter vinelandii.